The following is a 741-amino-acid chain: Copper-transporting ATPase (741 aa).

The HMA domain maps to 1 to 67 (MKESFYIEGM…LIEKLGYSPK (67 aa)). The Cytoplasmic portion of the chain corresponds to 1–83 (MKESFYIEGM…KKEFFSPNVK (83 aa)). Residues Cys12 and Cys15 each contribute to the Cu cation site. A helical transmembrane segment spans residues 84–104 (LALAVIFTLFVVYLSMGAMLS). Over 105-124 (PSLLPESLLTINNHSNFLNA) the chain is Extracellular. A helical membrane pass occupies residues 125–144 (CLQLIGTLIVMHLGRDFYIQ). Over 145–151 (GFKALWH) the chain is Cytoplasmic. A helical membrane pass occupies residues 152–172 (RQPNMSSLIAIGTSAALISSL). The Extracellular segment spans residues 173-190 (WQLYFVYTSQWSYGHYYF). A helical transmembrane segment spans residues 191–211 (ESVCVILMFVMVGKRIENVSK). Topologically, residues 212–339 (DKALDAMQAL…KAEISRLADK (128 aa)) are cytoplasmic. A helical membrane pass occupies residues 340-362 (VSSVFVPSVIAIAILAFVVWLII). Topologically, residues 363-375 (APKPDFWWNFGIA) are extracellular. Residues 376-393 (LEVFVSVLVISCPCALGL) traverse the membrane as a helical segment. Over 394–681 (ATPMSILVAN…KLSQATIKNI (288 aa)) the chain is Cytoplasmic. Residue Asp431 is the 4-aspartylphosphate intermediate of the active site. Mg(2+) is bound by residues Asp627 and Asp631. The helical transmembrane segment at 682–701 (KENLFWAFCYNSVFIPLACG) threads the bilayer. Residues 702–712 (VLYKANIMLSP) lie on the Extracellular side of the membrane. The chain crosses the membrane as a helical span at residues 713–731 (AIAGLAMSLSSVSVVLNSQ). Residues 732-741 (RLRNFKIKDH) are Cytoplasmic-facing.

Belongs to the cation transport ATPase (P-type) (TC 3.A.3) family. Type IB subfamily.

The protein localises to the cell membrane. It carries out the reaction Cu(2+)(in) + ATP + H2O = Cu(2+)(out) + ADP + phosphate + H(+). Its function is as follows. Probably involved in copper export. The polypeptide is Copper-transporting ATPase (copA) (Helicobacter pylori (Campylobacter pylori)).